The following is a 469-amino-acid chain: Ribulose bisphosphate carboxylase large chain (469 aa).

N6,N6,N6-trimethyllysine is present on Lys5. Positions 114 and 164 each coordinate substrate. The active-site Proton acceptor is Lys166. Lys168 is a binding site for substrate. Mg(2+) contacts are provided by Lys192, Asp194, and Glu195. At Lys192 the chain carries N6-carboxylysine. His285 serves as the catalytic Proton acceptor. The substrate site is built by Arg286, His318, and Ser370.

Belongs to the RuBisCO large chain family. Type I subfamily. Heterohexadecamer of 8 large chains and 8 small chains; disulfide-linked. The disulfide link is formed within the large subunit homodimers. Mg(2+) serves as cofactor. Post-translationally, the disulfide bond which can form in the large chain dimeric partners within the hexadecamer appears to be associated with oxidative stress and protein turnover.

Its subcellular location is the plastid. It is found in the chloroplast. It carries out the reaction 2 (2R)-3-phosphoglycerate + 2 H(+) = D-ribulose 1,5-bisphosphate + CO2 + H2O. The catalysed reaction is D-ribulose 1,5-bisphosphate + O2 = 2-phosphoglycolate + (2R)-3-phosphoglycerate + 2 H(+). Its function is as follows. RuBisCO catalyzes two reactions: the carboxylation of D-ribulose 1,5-bisphosphate, the primary event in carbon dioxide fixation, as well as the oxidative fragmentation of the pentose substrate in the photorespiration process. Both reactions occur simultaneously and in competition at the same active site. The protein is Ribulose bisphosphate carboxylase large chain of Fleroya rubrostipulata (Mitragyna rubrostipulata).